The sequence spans 226 residues: TPD1 protein homolog 1A (226 aa).

The N-terminal stretch at 1-35 is a signal peptide; sequence MRVSSASSTPPPPAFAAAAWAVVLLAMLRSDVALA.

As to quaternary structure, interacts with MSP1. In terms of tissue distribution, expressed in roots, and anthers and ovules during meiosis.

Functionally, involved in cell specification during anther development. Required for the differentiation of primary parietal cells into secondary parietal cells in anthers. May serve as an extracellular ligand for the MSP1 receptor kinase to limit sporocyte number in ovules. This Oryza sativa subsp. japonica (Rice) protein is TPD1 protein homolog 1A.